The following is a 339-amino-acid chain: Methylglutaconyl-CoA hydratase, mitochondrial (339 aa).

A mitochondrion-targeting transit peptide spans 1-67 (MAAAVAAAPG…AGGPAPKRGY (67 aa)). At Lys-100 the chain carries N6-acetyllysine; alternate. N6-succinyllysine; alternate is present on Lys-100. The RNA-binding stretch occupies residues 105-119 (KNLIKMLSKAVDALK). Residue Lys-109 is modified to N6-succinyllysine. An N6-acetyllysine; alternate mark is found at Lys-113 and Lys-144. N6-succinyllysine; alternate occurs at positions 113 and 144. N6-succinyllysine is present on residues Lys-148 and Lys-160. N6-acetyllysine; alternate is present on residues Lys-204 and Lys-211. An N6-succinyllysine; alternate mark is found at Lys-204 and Lys-211. Lys-329 carries the N6-succinyllysine modification.

The protein belongs to the enoyl-CoA hydratase/isomerase family. As to quaternary structure, homohexamer.

Its subcellular location is the mitochondrion. It catalyses the reaction (3S)-3-hydroxy-3-methylglutaryl-CoA = 3-methyl-(2E)-glutaconyl-CoA + H2O. The catalysed reaction is (3S)-citramalyl-CoA = itaconyl-CoA + H2O. The enzyme catalyses 3-hydroxyisovaleryl-CoA = 3-methylbut-2-enoyl-CoA + H2O. It carries out the reaction (S)-3-hydroxyglutaryl-CoA = (2E)-glutaconyl-CoA + H2O. The protein operates within amino-acid degradation; L-leucine degradation; (S)-3-hydroxy-3-methylglutaryl-CoA from 3-isovaleryl-CoA: step 3/3. In terms of biological role, catalyzes the fifth step in the leucine degradation pathway, the reversible hydration of 3-methylglutaconyl-CoA (3-MG-CoA) to 3-hydroxy-3-methylglutaryl-CoA (HMG-CoA). Can catalyze the reverse reaction but at a much lower rate in vitro. HMG-CoA is then quickly degraded by another enzyme (such as HMG-CoA lyase) to give acetyl-CoA and acetoacetate. Uses other substrates such as (2E)-glutaconyl-CoA efficiently in vitro, and to a lesser extent 3-methylcrotonyl-CoA (3-methyl-(2E)-butenoyl-CoA), crotonyl-CoA ((2E)-butenoyl-CoA) and 3-hydroxybutanoyl-CoA (the missing carboxylate reduces affinity to the active site). Originally it was identified as an RNA-binding protein as it binds to AU-rich elements (AREs) in vitro. AREs direct rapid RNA degradation and mRNA deadenylation. Might have itaconyl-CoA hydratase activity, converting itaconyl-CoA into citramalyl-CoA in the C5-dicarboxylate catabolism pathway. The C5-dicarboxylate catabolism pathway is required to detoxify itaconate, an antimicrobial metabolite and immunomodulator produced by macrophages during certain infections, that can act as a vitamin B12-poisoning metabolite. This chain is Methylglutaconyl-CoA hydratase, mitochondrial (AUH), found in Homo sapiens (Human).